The sequence spans 225 residues: MIEHTTIALLSGGIDSATAACIAMEAGQKVIGLSFDYGQRHLKELQAAADLAKNLNLEDHITIKIDLSSWGGSSLTDTSQAIPTQGIQKNTIPNTYVPGRNTIFVAIGLSLAEARGANRIALGINAMDYSGYPDCRPDYLKAYQELANLSSRVGREGNGIKLWAPLLDWEKTKIFEEALRLKIPIEKTWSCYQGESKPCGKCDSCRIRDKALKEIGREDLCSQNI.

10 to 20 contributes to the ATP binding site; it reads LSGGIDSATAA. Positions 191, 199, 202, and 205 each coordinate Zn(2+).

It belongs to the QueC family. Requires Zn(2+) as cofactor.

The enzyme catalyses 7-carboxy-7-deazaguanine + NH4(+) + ATP = 7-cyano-7-deazaguanine + ADP + phosphate + H2O + H(+). It functions in the pathway purine metabolism; 7-cyano-7-deazaguanine biosynthesis. Catalyzes the ATP-dependent conversion of 7-carboxy-7-deazaguanine (CDG) to 7-cyano-7-deazaguanine (preQ(0)). This Prochlorococcus marinus (strain NATL2A) protein is 7-cyano-7-deazaguanine synthase.